Consider the following 677-residue polypeptide: Glutamine--fructose-6-phosphate aminotransferase [isomerizing] 1 (677 aa).

C2 serves as the catalytic Nucleophile. Residues 2-269 (CGIFAYLNFH…DGEVVNLKDG (268 aa)) enclose the Glutamine amidotransferase type-2 domain. 2 consecutive SIS domains span residues 353 to 492 (HLKT…DTIS) and 524 to 667 (LAQL…VDQP). Residues 370-371 (TS), 415-417 (SQS), T420, and H571 each bind substrate.

In terms of assembly, homotetramer, may also exist as homodimers. As to expression, highly expressed in flowers specifically in mature anthers, mature pollen grains and pollen tubes. Barely observed in roots, leaves and stems.

It carries out the reaction D-fructose 6-phosphate + L-glutamine = D-glucosamine 6-phosphate + L-glutamate. It functions in the pathway nucleotide-sugar biosynthesis; UDP-N-acetyl-alpha-D-glucosamine biosynthesis; alpha-D-glucosamine 6-phosphate from D-fructose 6-phosphate: step 1/1. Its function is as follows. Controls the flux of glucose into the hexosamine biosynthetic pathway (HBP) leading to glucosamine (GlcN) content homeostasis. Involved in regulating the availability of precursors for N- and O-linked glycosylation of proteins. Required during pollen maturation and pollen tube formation by triggering polar deposition of pectin and callose in the pollen cell wall. Promotes tolerance to tunicamycin (Tm), an inhibitor of proteins N-glycosylation in endoplasmic reticulum (ER). The chain is Glutamine--fructose-6-phosphate aminotransferase [isomerizing] 1 from Arabidopsis thaliana (Mouse-ear cress).